The following is a 103-amino-acid chain: Small ribosomal subunit protein uS14c (103 aa).

The segment at 26-56 is disordered; it reads SSKKKIRSKVSPLSLSEKTKMQEKLQSLPRN.

It belongs to the universal ribosomal protein uS14 family. Part of the 30S ribosomal subunit.

Its subcellular location is the plastid. It is found in the chloroplast. Its function is as follows. Binds 16S rRNA, required for the assembly of 30S particles. The polypeptide is Small ribosomal subunit protein uS14c (Saccharum officinarum (Sugarcane)).